Reading from the N-terminus, the 395-residue chain is Subtilisin-like protease 9 (395 aa).

Positions 1–20 (MGFFRTLFSFSIFALSLADT) are cleaved as a signal peptide. A propeptide spanning residues 21-120 (SKFIGLDDVD…ADRVVKMAAL (100 aa)) is cleaved from the precursor. The Inhibitor I9 domain maps to 36-117 (SYIVVMKGAV…YVEADRVVKM (82 aa)). Residues 128 to 395 (SWGLGRISHK…RRLLYNGSGA (268 aa)) form the Peptidase S8 domain. Active-site charge relay system residues include aspartate 160 and histidine 191. Asparagine 252 carries an N-linked (GlcNAc...) asparagine glycan. Serine 341 functions as the Charge relay system in the catalytic mechanism. The N-linked (GlcNAc...) asparagine glycan is linked to asparagine 391.

This sequence belongs to the peptidase S8 family.

Its subcellular location is the secreted. Secreted subtilisin-like serine protease with keratinolytic activity that contributes to pathogenicity. This is Subtilisin-like protease 9 (SUB9) from Arthroderma otae (strain ATCC MYA-4605 / CBS 113480) (Microsporum canis).